We begin with the raw amino-acid sequence, 342 residues long: Ferrochelatase (342 aa).

Fe cation is bound by residues H188 and E268.

This sequence belongs to the ferrochelatase family.

The protein resides in the cytoplasm. It catalyses the reaction heme b + 2 H(+) = protoporphyrin IX + Fe(2+). The protein operates within porphyrin-containing compound metabolism; protoheme biosynthesis; protoheme from protoporphyrin-IX: step 1/1. In terms of biological role, catalyzes the ferrous insertion into protoporphyrin IX. The protein is Ferrochelatase of Rickettsia typhi (strain ATCC VR-144 / Wilmington).